A 133-amino-acid chain; its full sequence is Ribosome-binding factor A (133 aa).

It belongs to the RbfA family. Monomer. Binds 30S ribosomal subunits, but not 50S ribosomal subunits or 70S ribosomes.

The protein localises to the cytoplasm. Functionally, one of several proteins that assist in the late maturation steps of the functional core of the 30S ribosomal subunit. Associates with free 30S ribosomal subunits (but not with 30S subunits that are part of 70S ribosomes or polysomes). Required for efficient processing of 16S rRNA. May interact with the 5'-terminal helix region of 16S rRNA. The polypeptide is Ribosome-binding factor A (Acinetobacter baylyi (strain ATCC 33305 / BD413 / ADP1)).